Consider the following 338-residue polypeptide: Glycerol-3-phosphate dehydrogenase [NAD(P)+] (338 aa).

NADPH is bound by residues Ser-14, Tyr-15, His-35, and Lys-109. The sn-glycerol 3-phosphate site is built by Lys-109, Gly-138, and Thr-140. Residue Ala-142 participates in NADPH binding. 5 residues coordinate sn-glycerol 3-phosphate: Lys-194, Asp-247, Ser-257, Arg-258, and Asn-259. Lys-194 acts as the Proton acceptor in catalysis. Arg-258 provides a ligand contact to NADPH. NADPH is bound by residues Val-282 and Glu-284.

This sequence belongs to the NAD-dependent glycerol-3-phosphate dehydrogenase family.

It is found in the cytoplasm. It catalyses the reaction sn-glycerol 3-phosphate + NAD(+) = dihydroxyacetone phosphate + NADH + H(+). The catalysed reaction is sn-glycerol 3-phosphate + NADP(+) = dihydroxyacetone phosphate + NADPH + H(+). It functions in the pathway membrane lipid metabolism; glycerophospholipid metabolism. Functionally, catalyzes the reduction of the glycolytic intermediate dihydroxyacetone phosphate (DHAP) to sn-glycerol 3-phosphate (G3P), the key precursor for phospholipid synthesis. The sequence is that of Glycerol-3-phosphate dehydrogenase [NAD(P)+] from Shewanella sediminis (strain HAW-EB3).